The sequence spans 365 residues: Spermidine/putrescine import ATP-binding protein PotA (365 aa).

In terms of domain architecture, ABC transporter spans 9–239; that stretch reads IRLTNVTKSY…PINHFVANFI (231 aa). Position 41–48 (41–48) interacts with ATP; sequence GPSGCGKT.

It belongs to the ABC transporter superfamily. Spermidine/putrescine importer (TC 3.A.1.11.1) family. As to quaternary structure, the complex is composed of two ATP-binding proteins (PotA), two transmembrane proteins (PotB and PotC) and a solute-binding protein (PotD).

Its subcellular location is the cell membrane. It catalyses the reaction ATP + H2O + polyamine-[polyamine-binding protein]Side 1 = ADP + phosphate + polyamineSide 2 + [polyamine-binding protein]Side 1.. Part of the ABC transporter complex PotABCD involved in spermidine/putrescine import. Responsible for energy coupling to the transport system. This Lactiplantibacillus plantarum (strain ATCC BAA-793 / NCIMB 8826 / WCFS1) (Lactobacillus plantarum) protein is Spermidine/putrescine import ATP-binding protein PotA.